Consider the following 316-residue polypeptide: MIKLGIVMDPIANINIKKDSSFAMLLEAQRRGYELHYMEMGDLYLINGEARAHTRTLNVKQNYEEWFSFVGEQDLPLADLDVILMRKDPPFDTEFIYATYILERAEEKGTLIVNKPQSLRDCNEKLFTAWFSDLTPETLVTRNKAQLKAFWEKHSDIILKPLDGMGGASIFRVKEGDPNLGVIAETLTEHGTCYCMAQNYLPAIKDGDKRVLVVDGEPVPYCLARIPQGGETRGNLAAGGRGEPRPLTESDWKIARQIGPTLKEKGLIFVGLDIIGDRLTEINVTSPTCIREIEAEFPVSITGMLMDAIEARLQQQ.

The region spanning 125–310 (KLFTAWFSDL…ITGMLMDAIE (186 aa)) is the ATP-grasp domain. An ATP-binding site is contributed by 151–207 (WEKHSDIILKPLDGMGGASIFRVKEGDPNLGVIAETLTEHGTCYCMAQNYLPAIKDG). Mg(2+) contacts are provided by Glu281 and Asn283.

This sequence belongs to the prokaryotic GSH synthase family. Mg(2+) serves as cofactor. Mn(2+) is required as a cofactor.

The enzyme catalyses gamma-L-glutamyl-L-cysteine + glycine + ATP = glutathione + ADP + phosphate + H(+). It participates in sulfur metabolism; glutathione biosynthesis; glutathione from L-cysteine and L-glutamate: step 2/2. The chain is Glutathione synthetase from Shigella flexneri.